A 340-amino-acid polypeptide reads, in one-letter code: GTPase Obg (340 aa).

The Obg domain maps to Met-1–Ile-161. The 174-residue stretch at Ala-162–Met-335 folds into the OBG-type G domain. GTP contacts are provided by residues Gly-168 to Ser-175, Phe-193 to Val-197, Asp-215 to Gly-218, Asn-285 to Asp-288, and Ser-316 to Ile-318. Residues Ser-175 and Thr-195 each contribute to the Mg(2+) site.

It belongs to the TRAFAC class OBG-HflX-like GTPase superfamily. OBG GTPase family. Monomer. It depends on Mg(2+) as a cofactor.

The protein resides in the cytoplasm. In terms of biological role, an essential GTPase which binds GTP, GDP and possibly (p)ppGpp with moderate affinity, with high nucleotide exchange rates and a fairly low GTP hydrolysis rate. Plays a role in control of the cell cycle, stress response, ribosome biogenesis and in those bacteria that undergo differentiation, in morphogenesis control. The polypeptide is GTPase Obg (Blochmanniella pennsylvanica (strain BPEN)).